Reading from the N-terminus, the 156-residue chain is Small ribosomal subunit protein uS7 (156 aa).

Belongs to the universal ribosomal protein uS7 family. Part of the 30S ribosomal subunit. Contacts proteins S9 and S11.

One of the primary rRNA binding proteins, it binds directly to 16S rRNA where it nucleates assembly of the head domain of the 30S subunit. Is located at the subunit interface close to the decoding center, probably blocks exit of the E-site tRNA. This chain is Small ribosomal subunit protein uS7, found in Geobacter sp. (strain M21).